The following is a 66-amino-acid chain: Beta-toxin Chui2 (66 aa).

The region spanning 1 to 66 (KEGYIVNSYT…VWPLKNKTCN (66 aa)) is the LCN-type CS-alpha/beta domain. 4 disulfides stabilise this stretch: cysteine 12/cysteine 65, cysteine 16/cysteine 41, cysteine 25/cysteine 46, and cysteine 29/cysteine 48. At asparagine 66 the chain carries Asparagine amide.

This sequence belongs to the long (4 C-C) scorpion toxin superfamily. Sodium channel inhibitor family. Beta subfamily. In terms of tissue distribution, expressed by the venom gland.

The protein resides in the secreted. Its function is as follows. Beta toxins bind voltage-independently at site-4 of sodium channels (Nav) and shift the voltage of activation toward more negative potentials thereby affecting sodium channel activation and promoting spontaneous and repetitive firing. The polypeptide is Beta-toxin Chui2 (Centruroides huichol (Scorpion)).